Consider the following 492-residue polypeptide: Trigger factor (492 aa).

Residues 77-96 (EILSSRGEKSATQPAISMTE) form a disordered region. Residues 169–254 (GDRVTMNYLG…VKEVAAAAAV (86 aa)) form the PPIase FKBP-type domain. Residues 439–492 (ELLADDGEEETETKKKAPAKKKAAAKADDAAEGEEAAPKKKAPAKKKATEADAE) are disordered.

Belongs to the FKBP-type PPIase family. Tig subfamily.

The protein localises to the cytoplasm. The enzyme catalyses [protein]-peptidylproline (omega=180) = [protein]-peptidylproline (omega=0). Functionally, involved in protein export. Acts as a chaperone by maintaining the newly synthesized protein in an open conformation. Functions as a peptidyl-prolyl cis-trans isomerase. The protein is Trigger factor of Agrobacterium fabrum (strain C58 / ATCC 33970) (Agrobacterium tumefaciens (strain C58)).